We begin with the raw amino-acid sequence, 942 residues long: tRNAse Z TRZ4, mitochondrial (942 aa).

The transit peptide at 1–50 directs the protein to the mitochondrion; the sequence is MLTSSMPQNLSLFGFSPLKSSSFALILRPFSLYPPIFASSSPAPSRRPPR. Residues 38–85 form a disordered region; sequence ASSSPAPSRRPPRTAGYRRSGPSPPRRKWSSFEEQKRKGRSPMEKDKA. The span at 67-85 shows a compositional bias: basic and acidic residues; that stretch reads SSFEEQKRKGRSPMEKDKA.

Belongs to the RNase Z family. As to quaternary structure, homodimer. It depends on Zn(2+) as a cofactor. Ca(2+) is required as a cofactor. Requires Mn(2+) as cofactor. Mg(2+) serves as cofactor.

The protein localises to the mitochondrion. The catalysed reaction is Endonucleolytic cleavage of RNA, removing extra 3' nucleotides from tRNA precursor, generating 3' termini of tRNAs. A 3'-hydroxy group is left at the tRNA terminus and a 5'-phosphoryl group is left at the trailer molecule.. Functionally, zinc phosphodiesterase, which displays tRNA 3'-processing endonuclease activity. Involved in tRNA maturation, by removing a 3'-trailer from precursor tRNA. Can process the mitochondrial tRNA-like structures (t-elements). This Arabidopsis thaliana (Mouse-ear cress) protein is tRNAse Z TRZ4, mitochondrial.